The following is a 278-amino-acid chain: Manganese import system permease protein ScaB (278 aa).

8 consecutive transmembrane segments (helical) span residues 18-38 (ALITAIVIGVVAGAVGCFIIL), 61-81 (ILGINFFIGAITFGLLASIII), 94-114 (TAIGITFSSFLALGIILISVA), 134-154 (LDMWISIGVGILVLLVISIFF), 174-194 (VNFYHYLLMILLTLVSVTAMQ), 196-216 (VGTILIVAMLITPAATAYLYA), 222-242 (MILLSSALGAGASVLGLFIGY), and 246-266 (VAAGSSIVLTSALIFLVSFFI).

It belongs to the ABC-3 integral membrane protein family. In terms of assembly, the complex is composed of two ATP-binding proteins (ScaC), two transmembrane proteins (ScaB) and a solute-binding protein (ScaA).

It localises to the cell membrane. In terms of biological role, part of the high-affinity ABC transporter complex ScaABC involved in manganese import. Probably responsible for the translocation of the substrate across the membrane. Essential for growth under Mn(2+)-limiting conditions. In Streptococcus gordonii, this protein is Manganese import system permease protein ScaB.